The chain runs to 316 residues: Neuroguidin-B (316 aa).

Disordered regions lie at residues 124–169 and 292–316; these read ENDP…SKVK and VPFM…RRRH. Residues 145–156 show a composition bias toward acidic residues; it reads DERESDSGEEGA. Residues 296 to 316 are compositionally biased toward basic residues; it reads KKSKKGPKKSKKKKGFSRRRH.

Belongs to the SAS10 family. In terms of assembly, part of the small subunit (SSU) processome, composed of more than 70 proteins and the RNA chaperone small nucleolar RNA (snoRNA) U3.

Its subcellular location is the nucleus. It is found in the nucleolus. The protein resides in the chromosome. The protein localises to the centromere. It localises to the cytoplasm. Its subcellular location is the cell projection. It is found in the axon. The protein resides in the dendrite. The protein localises to the filopodium. Part of the small subunit (SSU) processome, first precursor of the small eukaryotic ribosomal subunit. During the assembly of the SSU processome in the nucleolus, many ribosome biogenesis factors, an RNA chaperone and ribosomal proteins associate with the nascent pre-rRNA and work in concert to generate RNA folding, modifications, rearrangements and cleavage as well as targeted degradation of pre-ribosomal RNA by the RNA exosome. Its dissociation from the complex determines the transition from state pre-A1 to state pre-A1*. May inhibit mRNA translation. In Xenopus laevis (African clawed frog), this protein is Neuroguidin-B (ngdn-b).